A 908-amino-acid chain; its full sequence is MVEEKTIRLSQVARKLNVATTTIAAYLLEKGFRVENKPNTKITLEQYKILAEEFADSAMDKEEAAELVIGQSYEKEPKVIAKQQEPIKHVHPKEKQVEIEKISLPVIDAPTIIEHKIIEHKTEEPPILQPELPTEEKEELEVIESPQAPQEELKPELETEVQEQDKEIQQELDDTAKVEQAPITKGPEKIDFSKQGEFKGVTVLGKIELAEKKEPKKFQQVASSDIDKKNKKRPRKRVASETGLPSSGKREEEANRYKPKGKVTNKTPEAPKTAVSEKQIQDQIKSTLAKLGGGKNVASRAKYRREKRSLLAEEQAEERLQAAKDAKKLQVTEFIAASDLASLMGVSINQLLSTCMNLGMLVSINQRLDAEAITIIADEFGYQVAFTDVKTQELEEEEEANPEDLVERAPIVTIMGHVDHGKTSLLDYIRNTQITKTEAGGITQHIGAYEVVTESGKHIAFLDTPGHEAFTAMRARGAKLTDIAIIVIAADDGVRPQTKEAINHAKLAGVPIIIAINKMDKPQANPERVKEELAHLNILVEDWGGKYQSQGVSAISGEGVKELLEKILFEAELLELKANSHKKARGTVIEASLDQGRGYLATIMVQDGNLRIGDVVLAGAYYGKIKAMFDYQGKPVKQAGPSTPMQILGLNGAPQAGDLFRAMNTEKEARDIATQRQQILREQGFRTKTHITLDEIGRRLAIGNFKELNIILKGDVDGSVEALSDSLLKLSTEEIKVTILHKGVGAIVESDILLAAASDAIIIGFQVRPTPPVRKLAEKEGIEIRLYSIIYDAINDIKDAMEGMLAPTIEEIITGSASVREIFKITGTGTVAGCYVTEGYIKKNNSIRVIRDGIVIYTGSIKHLKHFKEEMQQVKTGFECGISITNFNDLKVNDVIEGFEQKEVERKL.

Disordered stretches follow at residues 123–154 and 212–278; these read EEPP…EELK and KKEP…VSEK. The tr-type G domain maps to 407-577; it reads ERAPIVTIMG…LFEAELLELK (171 aa). The tract at residues 416–423 is G1; that stretch reads GHVDHGKT. Residue 416-423 coordinates GTP; it reads GHVDHGKT. Residues 441 to 445 form a G2 region; that stretch reads GITQH. Residues 463–466 are G3; the sequence is DTPG. GTP-binding positions include 463–467 and 517–520; these read DTPGH and NKMD. The tract at residues 517–520 is G4; sequence NKMD. The tract at residues 553–555 is G5; it reads SAI.

This sequence belongs to the TRAFAC class translation factor GTPase superfamily. Classic translation factor GTPase family. IF-2 subfamily.

The protein localises to the cytoplasm. In terms of biological role, one of the essential components for the initiation of protein synthesis. Protects formylmethionyl-tRNA from spontaneous hydrolysis and promotes its binding to the 30S ribosomal subunits. Also involved in the hydrolysis of GTP during the formation of the 70S ribosomal complex. This Amoebophilus asiaticus (strain 5a2) protein is Translation initiation factor IF-2.